Reading from the N-terminus, the 309-residue chain is Bombesin receptor-activated protein C6orf89 homolog (309 aa).

Residues 1–59 (MGSSLSEPCIYDKLSESIDILRQSGYRYGMSEREIEKFIKQVLETNEPRREPPQFPILR) are Cytoplasmic-facing. The chain crosses the membrane as a helical span at residues 60–80 (ATVKFVVAVGVVLMAVLVFTY). Topologically, residues 81–309 (PQSPVLMGSV…QDVQCDSAVL (229 aa)) are extracellular.

As to quaternary structure, homodimer.

It is found in the golgi apparatus membrane. It localises to the cytoplasm. Functionally, exhibits histone deacetylase (HDAC) enhancer properties. May play a role in progression through the cell cycle. The chain is Bombesin receptor-activated protein C6orf89 homolog from Danio rerio (Zebrafish).